The chain runs to 232 residues: Large ribosomal subunit protein uL1 (232 aa).

This sequence belongs to the universal ribosomal protein uL1 family. Part of the 50S ribosomal subunit.

Functionally, binds directly to 23S rRNA. The L1 stalk is quite mobile in the ribosome, and is involved in E site tRNA release. In terms of biological role, protein L1 is also a translational repressor protein, it controls the translation of the L11 operon by binding to its mRNA. The protein is Large ribosomal subunit protein uL1 of Chlamydia caviae (strain ATCC VR-813 / DSM 19441 / 03DC25 / GPIC) (Chlamydophila caviae).